An 807-amino-acid chain; its full sequence is Glycerol-3-phosphate acyltransferase (807 aa).

The HXXXXD motif motif lies at cysteine 305–methionine 310.

Belongs to the GPAT/DAPAT family.

It localises to the cell inner membrane. It carries out the reaction sn-glycerol 3-phosphate + an acyl-CoA = a 1-acyl-sn-glycero-3-phosphate + CoA. Its pathway is phospholipid metabolism; CDP-diacylglycerol biosynthesis; CDP-diacylglycerol from sn-glycerol 3-phosphate: step 1/3. This Klebsiella pneumoniae (strain 342) protein is Glycerol-3-phosphate acyltransferase.